Here is a 423-residue protein sequence, read N- to C-terminus: Voltage-dependent calcium channel gamma-8 subunit (423 aa).

Helical transmembrane passes span 19-39 (VQVL…TIAI), 127-147 (SSIF…CVAA), 157-177 (IILG…IGVI), and 207-227 (FGGL…NIYI). Residues Ser251 and Ser254 each carry the phosphoserine modification. Residues 271 to 304 (RRSRSSSRGSSEASPSRDASPGGPGGPGFASTDI) form a disordered region. A compositionally biased stretch (low complexity) spans 276–287 (SSRGSSEASPSR). A helical membrane pass occupies residues 318–338 (VAAGLASAGGGGSGAGVGAYG). Disordered stretches follow at residues 342-363 (GAAG…GFLT) and 378-423 (VTVT…TTPV). The span at 384 to 399 (PAAPAPAPAPPAPAAP) shows a compositional bias: pro residues. The segment covering 410–423 (ASNTNTLNRKTTPV) has biased composition (polar residues).

Belongs to the PMP-22/EMP/MP20 family. CACNG subfamily. Interacts with CACNA1C. Identified in a complex with the L-type calcium channel subunits CACNA1C, CACNA2D1 and either CACNB1 or CACNB2. Acts as an auxiliary subunit for AMPA-selective glutamate receptors (AMPARs). Found in a complex with GRIA1, GRIA2, GRIA3, GRIA4, CNIH2, CNIH3, CACNG2, CACNG3, CACNG4, CACNG5 and CACNG7. Interacts with CNIH2. Found in a complex with GRIA1, GRIA2, GRIA3, GRIA4, DLG4 and CNIH2. Palmitoylated. Probably palmitoylated by ZDHHC3 and ZDHHC7.

The protein resides in the cell membrane. It localises to the postsynaptic density membrane. Its function is as follows. Regulates the activity of L-type calcium channels that contain CACNA1C as pore-forming subunit. Regulates the trafficking and gating properties of AMPA-selective glutamate receptors (AMPARs). Promotes their targeting to the cell membrane and synapses and modulates their gating properties by slowing their rates of activation, deactivation and desensitization and by mediating their resensitization. Does not show subunit-specific AMPA receptor regulation and regulates all AMPAR subunits. Thought to stabilize the calcium channel in an inactivated (closed) state. The sequence is that of Voltage-dependent calcium channel gamma-8 subunit from Mus musculus (Mouse).